The primary structure comprises 199 residues: ATP synthase subunit a (199 aa).

6 helical membrane-spanning segments follow: residues 2 to 22 (TNVYFLDIFMFVYVLQFLFYF), 25 to 45 (SMLGVLVNKFLGLLVVVFSYT), 53 to 73 (VISVFTFLVLLTCCFGGYFMY), 80 to 100 (MIEFTFVYAMVAWLSTLLTFI), 143 to 163 (VNVLVGHVISMMLYQLLELYL), and 164 to 184 (GIFYVWIVVLAIVMECFVFFI).

This sequence belongs to the ATPase A chain family. F-type ATPases have 2 components, CF(1) - the catalytic core - and CF(0) - the membrane proton channel. CF(1) has five subunits: alpha(3), beta(3), gamma(1), delta(1), epsilon(1). CF(0) has three main subunits: a, b and c.

The protein resides in the mitochondrion inner membrane. Its function is as follows. Mitochondrial membrane ATP synthase (F(1)F(0) ATP synthase or Complex V) produces ATP from ADP in the presence of a proton gradient across the membrane which is generated by electron transport complexes of the respiratory chain. F-type ATPases consist of two structural domains, F(1) - containing the extramembraneous catalytic core and F(0) - containing the membrane proton channel, linked together by a central stalk and a peripheral stalk. During catalysis, ATP synthesis in the catalytic domain of F(1) is coupled via a rotary mechanism of the central stalk subunits to proton translocation. Key component of the proton channel; it may play a direct role in the translocation of protons across the membrane. The protein is ATP synthase subunit a (ATP6) of Ascaris suum (Pig roundworm).